The following is a 200-amino-acid chain: dITP/XTP pyrophosphatase (200 aa).

8–13 (TGNQGK) contributes to the substrate binding site. D69 serves as the catalytic Proton acceptor. D69 is a Mg(2+) binding site. Substrate contacts are provided by residues S70, 154-157 (FGYD), K177, and 182-183 (HR).

It belongs to the HAM1 NTPase family. In terms of assembly, homodimer. Mg(2+) is required as a cofactor.

The enzyme catalyses XTP + H2O = XMP + diphosphate + H(+). It catalyses the reaction dITP + H2O = dIMP + diphosphate + H(+). The catalysed reaction is ITP + H2O = IMP + diphosphate + H(+). Its function is as follows. Pyrophosphatase that catalyzes the hydrolysis of nucleoside triphosphates to their monophosphate derivatives, with a high preference for the non-canonical purine nucleotides XTP (xanthosine triphosphate), dITP (deoxyinosine triphosphate) and ITP. Seems to function as a house-cleaning enzyme that removes non-canonical purine nucleotides from the nucleotide pool, thus preventing their incorporation into DNA/RNA and avoiding chromosomal lesions. The sequence is that of dITP/XTP pyrophosphatase from Vibrio vulnificus (strain CMCP6).